We begin with the raw amino-acid sequence, 210 residues long: Na(+)-translocating NADH-quinone reductase subunit D (210 aa).

6 consecutive transmembrane segments (helical) span residues 10 to 30 (VLIG…GVCS), 42 to 62 (LVMT…ISLI), 72 to 92 (IIVQ…VLQA), 103 to 123 (VFVG…AYAM), 131 to 151 (FMDG…VGFV), and 178 to 198 (NGLL…IWII).

The protein belongs to the NqrDE/RnfAE family. As to quaternary structure, composed of six subunits; NqrA, NqrB, NqrC, NqrD, NqrE and NqrF.

The protein localises to the cell inner membrane. It catalyses the reaction a ubiquinone + n Na(+)(in) + NADH + H(+) = a ubiquinol + n Na(+)(out) + NAD(+). In terms of biological role, NQR complex catalyzes the reduction of ubiquinone-1 to ubiquinol by two successive reactions, coupled with the transport of Na(+) ions from the cytoplasm to the periplasm. NqrA to NqrE are probably involved in the second step, the conversion of ubisemiquinone to ubiquinol. In Shewanella pealeana (strain ATCC 700345 / ANG-SQ1), this protein is Na(+)-translocating NADH-quinone reductase subunit D.